Reading from the N-terminus, the 214-residue chain is Urease accessory protein UreF (214 aa).

Belongs to the UreF family. UreD, UreF and UreG form a complex that acts as a GTP-hydrolysis-dependent molecular chaperone, activating the urease apoprotein by helping to assemble the nickel containing metallocenter of UreC. The UreE protein probably delivers the nickel.

Its subcellular location is the cytoplasm. In terms of biological role, required for maturation of urease via the functional incorporation of the urease nickel metallocenter. This chain is Urease accessory protein UreF, found in Ruegeria sp. (strain TM1040) (Silicibacter sp.).